Here is a 138-residue protein sequence, read N- to C-terminus: MGDKTKVQVSKLKPGRYIIIDDEPCRIVNITVSSPGKHGSAKARIEAVGIFDGKVRSIVKPTSAEVDVPIIDKKTAQVIAITPDTVQIMDMETYETFEVPIDTGVADEIRDQLKEGINVEYWETLGRIKIMRIKGEGE.

Hypusine is present on K37.

It belongs to the eIF-5A family.

It is found in the cytoplasm. Functions by promoting the formation of the first peptide bond. This Pyrococcus horikoshii (strain ATCC 700860 / DSM 12428 / JCM 9974 / NBRC 100139 / OT-3) protein is Translation initiation factor 5A (eif5a).